The sequence spans 399 residues: uncharacterized protein (399 aa).

Residues 1 to 8 (MHNLQVRR) lie on the Cytoplasmic side of the membrane. A helical transmembrane segment spans residues 9 to 35 (HYAALKGFYLFAFLGTGSIIPLLSMYL). Residues 36–42 (TKEQHLS) lie on the Extracellular side of the membrane. Residues 43-71 (GSQVGLIMSLGPIVMIFFQPFWGMLSDYT) form a helical membrane-spanning segment. Topologically, residues 72 to 75 (QKTK) are cytoplasmic. The chain crosses the membrane as a helical span at residues 76-101 (GLLAVCTSITGIIGLAYIAFDSFPLF). Topologically, residues 102-105 (ILIA) are extracellular. A helical membrane pass occupies residues 106–123 (ACFAAFQSTIIPLSDSIS). Topologically, residues 124-134 (LRYTQETNGNY) are cytoplasmic. A helical transmembrane segment spans residues 135–157 (GGIRLFGSLGFGVAVFAMGQVTN). Residues 158 to 160 (QLY) lie on the Extracellular side of the membrane. Residues 161 to 180 (PIHVIFIFGCAFLCIAAILA) form a helical membrane-spanning segment. Residues 181 to 210 (SQVPGQQKTTKVNIRKGFRELISNKTFLIF) are Cytoplasmic-facing. A helical transmembrane segment spans residues 211–230 (MIITFTTFAPNLANNTYFSL). At 231–234 (FLDK) the chain is on the extracellular side. A helical membrane pass occupies residues 235–259 (SGASLSAIGILFFIGVISEIPFMRF). The Cytoplasmic portion of the chain corresponds to 260-269 (AQTFIDKMGL). The chain crosses the membrane as a helical span at residues 270–289 (LNVIMLSGGVSLFRWALYFT). At 290–292 (APS) the chain is on the extracellular side. A helical membrane pass occupies residues 293–315 (LWIIYATVFLQGVAIGLFIPAAL). The Cytoplasmic portion of the chain corresponds to 316-327 (QYVKKITPRHVE). Residues 328 to 355 (ATALTMYAAIGNGFGNWFCTFAGGYIFD) traverse the membrane as a helical segment. At 356 to 358 (YVS) the chain is on the extracellular side. Residues 359 to 379 (IFAVYLLFGILSIAGFGLTLY) traverse the membrane as a helical segment. At 380-399 (LMKAEKNKHTLHQPAVTFKP) the chain is on the cytoplasmic side.

The protein belongs to the major facilitator superfamily.

The protein resides in the cell membrane. This is an uncharacterized protein from Bacillus subtilis (strain 168).